A 257-amino-acid polypeptide reads, in one-letter code: Lysine-rich coiled-coil protein 1 (257 aa).

The interval 145–257 (NTSAHQASYK…MLWDQSILGF (113 aa)) is disordered. The span at 152 to 162 (SYKHIHQKRKR) shows a compositional bias: basic residues. Composition is skewed to basic and acidic residues over residues 163 to 176 (HTEE…EERP), 183 to 193 (ACEEIDLDKYK), 200 to 212 (TEAE…TEKL), and 219 to 228 (RSRDVASKKE). Residues 210–248 (EKLKNRKEKRSRDVASKKEERKRRKEKKEQGQERTEEEM) adopt a coiled-coil conformation.

This Bos taurus (Bovine) protein is Lysine-rich coiled-coil protein 1 (KRCC1).